We begin with the raw amino-acid sequence, 734 residues long: Meiotic driver SPOK1 (734 aa).

The stretch at 4 to 41 (KDRIAQLLRELEEAKARVEEAKAREAQERCEKERLQLE) forms a coiled coil. Disordered regions lie at residues 180-222 (ELTQ…ICSN) and 414-499 (LSSA…MADP). Polar residues predominate over residues 416 to 429 (SAPSSQNTDISEYT). The segment covering 457-468 (NEHDEHDEDHSE) has biased composition (basic and acidic residues).

Its subcellular location is the cytoplasm. The protein localises to the nucleus. Promotes unequal transmission of alleles from the parental zygote to progeny spores by acting as poison/antidote system, leading to poisoning of progeny that do not inherit the allele. May possess DNA nuclease activity that leads to spore killing, and a kinase activity that confers resistance to the nuclease activity. Can suppress meiotic drive by the P.anserina SPOK2, SPOK3 and SPOK4 proteins. In Podospora comata, this protein is Meiotic driver SPOK1.